The sequence spans 144 residues: Putative 2'-deoxynucleoside 5'-phosphate N-hydrolase 1 (144 aa).

Substrate is bound by residues Y7–R13, Y22, H39, E83, and S107–M109.

This sequence belongs to the 2'-deoxynucleoside 5'-phosphate N-hydrolase 1 family. As to quaternary structure, monomer and homodimer.

Its subcellular location is the cytoplasm. The protein resides in the nucleus. The catalysed reaction is a pyrimidine 2'-deoxyribonucleoside 5'-phosphate + H2O = a pyrimidine nucleobase + 2-deoxy-D-ribose 5-phosphate. It carries out the reaction a purine 2'-deoxyribonucleoside 5'-phosphate + H2O = a purine nucleobase + 2-deoxy-D-ribose 5-phosphate. Its function is as follows. Catalyzes the cleavage of the N-glycosidic bond of deoxyribonucleoside 5'-monophosphates to yield deoxyribose 5-phosphate and a purine or pyrimidine base. The polypeptide is Putative 2'-deoxynucleoside 5'-phosphate N-hydrolase 1 (Trichoplax adhaerens (Trichoplax reptans)).